A 418-amino-acid chain; its full sequence is Magnesium transporter MRS2-E (418 aa).

A disordered region spans residues 119 to 146 (DAAPSTNPAAADRGNGTEQGDQGSVPGL). A coiled-coil region spans residues 166-232 (VCLEHACKDL…RDELEHLLDD (67 aa)). The segment covering 258-268 (DSHKYASVDHD) has biased composition (basic and acidic residues). The interval 258-287 (DSHKYASVDHDDDREEEDHDDETESGRESS) is disordered. A compositionally biased stretch (acidic residues) spans 269-280 (DDREEEDHDDET). Residues 344 to 364 (GVMLTTATVVVTAGIVVVSLF) form a helical membrane-spanning segment. The Required for magnesium transport activity motif lies at 365-367 (GMN). A helical transmembrane segment spans residues 389 to 409 (FWETTFGTVAGCIAIYLLAIY).

This sequence belongs to the CorA metal ion transporter (MIT) (TC 1.A.35.5) family.

The protein localises to the membrane. In terms of biological role, magnesium transporter that may mediate the influx of magnesium. In Oryza sativa subsp. indica (Rice), this protein is Magnesium transporter MRS2-E (MRS2-E).